A 505-amino-acid polypeptide reads, in one-letter code: Histidine ammonia-lyase (505 aa).

The 5-imidazolinone (Ala-Gly) cross-link spans 141-143 (ASG). Serine 142 is modified (2,3-didehydroalanine (Ser)).

It belongs to the PAL/histidase family. Contains an active site 4-methylidene-imidazol-5-one (MIO), which is formed autocatalytically by cyclization and dehydration of residues Ala-Ser-Gly.

The protein localises to the cytoplasm. The enzyme catalyses L-histidine = trans-urocanate + NH4(+). Its pathway is amino-acid degradation; L-histidine degradation into L-glutamate; N-formimidoyl-L-glutamate from L-histidine: step 1/3. This Bacillus cereus (strain ATCC 10987 / NRS 248) protein is Histidine ammonia-lyase.